The chain runs to 350 residues: 4-hydroxy-2-oxovalerate aldolase 2 (350 aa).

The 253-residue stretch at 8-260 (ITVHDMTLRD…ETGVDVFKIQ (253 aa)) folds into the Pyruvate carboxyltransferase domain. Residue 16 to 17 (RD) coordinates substrate. Position 17 (aspartate 17) interacts with Mn(2+). Histidine 20 serves as the catalytic Proton acceptor. Substrate is bound by residues serine 170 and histidine 199. Histidine 199 and histidine 201 together coordinate Mn(2+). Residue tyrosine 290 coordinates substrate.

It belongs to the 4-hydroxy-2-oxovalerate aldolase family.

It catalyses the reaction (S)-4-hydroxy-2-oxopentanoate = acetaldehyde + pyruvate. The chain is 4-hydroxy-2-oxovalerate aldolase 2 (tesG) from Comamonas testosteroni (Pseudomonas testosteroni).